Consider the following 551-residue polypeptide: Cytochrome bc1 complex cytochrome b subunit (551 aa).

The chain crosses the membrane as a helical span at residues 44–64 (FLLGEIALYSFIVLLLTGVYL). Residues His113 and His127 each contribute to the heme site. 3 consecutive transmembrane segments (helical) span residues 117-137 (ALMFTAAIMVHLARIFFTGAF), 145-165 (WVIGSLLLILAMFEGYFGYSM), and 188-208 (VIGTWLHWALFGGDFPGTILI). Heme-binding residues include His215 and His230. The next 5 membrane-spanning stretches (helical) occupy residues 216 to 236 (ILLIPGVILALIGLHLALVWF), 265 to 285 (SGAFFAAIVGVLGLMGGFLQI), 334 to 354 (PVWVAVIMALVFVLLITYPFL), 380 to 400 (IGAMAITFYMVLTLAAMNDII), and 417 to 437 (IGMVILPLLVYFITYRWCIGL). Positions 532 to 551 (ALREHQDSIASSPNGERGKH) are disordered.

The protein belongs to the cytochrome b family. The cytochrome bc1 complex is composed of a cytochrome b (QcrB), the Rieske iron-sulfur protein (QcrA) and a diheme cytochrome c (QcrC) subunit. Requires heme as cofactor.

The protein resides in the cell membrane. It catalyses the reaction a quinol + 2 Fe(III)-[cytochrome c](out) = a quinone + 2 Fe(II)-[cytochrome c](out) + 2 H(+)(out). Cytochrome b subunit of the cytochrome bc1 complex, an essential component of the respiratory electron transport chain required for ATP synthesis. The bc1 complex catalyzes the oxidation of ubiquinol and the reduction of cytochrome c in the respiratory chain. The bc1 complex operates through a Q-cycle mechanism that couples electron transfer to generation of the proton gradient that drives ATP synthesis. The cytochrome b subunit contains two ubiquinol reactive sites: the oxidation (QP) site and the reduction (QN) site. The polypeptide is Cytochrome bc1 complex cytochrome b subunit (qcrB) (Mycobacterium leprae (strain TN)).